The sequence spans 594 residues: CRISPR-associated DNA-binding protein Cas12m (594 aa).

Positions 1–85 (MSRLEARTRY…EKVRQVMVFE (85 aa)) are recognition domain (REC1-N). The recognition domain (REC2) stretch occupies residues 86 to 153 (SETTKKIKEL…ERSFIFEARK (68 aa)). Residues 154-211 (QELAQLEKERWAVVKELGKGSGLYWCNLEDVVNSYDIGRKKAKAAGGEMRFHRWDGTG) are recognition domain (REC1-C). The tract at residues 212-314 (KVTVRFQKGL…RYKLNLVLEI (103 aa)) is wedge domain (WED). Residues 315–329 (LGENTNRILPALEGT) are linker. The segment at 330–540 (AAIDLGWRTV…KNHVEFTYVP (211 aa)) is ruvC-I. Residues 541–575 (AENTTITCHKCGHKEKFDAAAQIIHTCSTCGELWD) are target nucleic-acid binding (TNB). Zn(2+)-binding residues include cysteine 548, cysteine 551, cysteine 567, and cysteine 570. Residues 576-594 (QDYNAAKNLLAFSQKGGVK) are ruvC-II. Aspartate 577 serves as a coordination point for Mg(2+).

It belongs to the CRISPR-associated DNA-binding protein Cas12m family. Requires Mg(2+) as cofactor. Zn(2+) serves as cofactor.

Functionally, CRISPR (clustered regularly interspaced short palindromic repeat), is an adaptive immune system that provides protection against mobile genetic elements (viruses, transposable elements and conjugative plasmids). CRISPR clusters contain sequences complementary to antecedent mobile elements and target invading nucleic acids. CRISPR clusters are transcribed and processed into CRISPR RNA (crRNA). Recognizes a short motif in the CRISPR repeat sequences (the 5' PAM or protospacer adjacent motif, 5'-C/TCN-3' in this organism) to help distinguish self versus nonself, as targets within the bacterial CRISPR locus do not have PAMs. Upon expression in E.coli as a CRISPR locus inhibits plasmid propagation when targeted to regions essential for plasmid propagation (replication origin but not a selectable marker), probably by inhibiting transcription. Cas12m-crRNA binds DNA in a PAM-dependent, crRNA-guided fashion. Upon expression in E.coli as a CRISPR region preferentially binds to its associated crRNA. Probably required for pre-crRNA processing to mature crRNA. The sequence is that of CRISPR-associated DNA-binding protein Cas12m from Thermanaerosceptrum fracticalcis.